Reading from the N-terminus, the 299-residue chain is 4-diphosphocytidyl-2-C-methyl-D-erythritol kinase (299 aa).

K17 is an active-site residue. Residue 99–109 (PLASGLGGGSS) participates in ATP binding. D142 is a catalytic residue.

The protein belongs to the GHMP kinase family. IspE subfamily.

The enzyme catalyses 4-CDP-2-C-methyl-D-erythritol + ATP = 4-CDP-2-C-methyl-D-erythritol 2-phosphate + ADP + H(+). The protein operates within isoprenoid biosynthesis; isopentenyl diphosphate biosynthesis via DXP pathway; isopentenyl diphosphate from 1-deoxy-D-xylulose 5-phosphate: step 3/6. In terms of biological role, catalyzes the phosphorylation of the position 2 hydroxy group of 4-diphosphocytidyl-2C-methyl-D-erythritol. The sequence is that of 4-diphosphocytidyl-2-C-methyl-D-erythritol kinase from Deinococcus radiodurans (strain ATCC 13939 / DSM 20539 / JCM 16871 / CCUG 27074 / LMG 4051 / NBRC 15346 / NCIMB 9279 / VKM B-1422 / R1).